Reading from the N-terminus, the 599-residue chain is Elongation factor 4 (599 aa).

In terms of domain architecture, tr-type G spans 5–187; the sequence is SHIRNFSIIA…RLVTAIPAPE (183 aa). Residues 17–22 and 134–137 contribute to the GTP site; these read DHGKST and NKMD.

This sequence belongs to the TRAFAC class translation factor GTPase superfamily. Classic translation factor GTPase family. LepA subfamily.

It localises to the cell inner membrane. The enzyme catalyses GTP + H2O = GDP + phosphate + H(+). Required for accurate and efficient protein synthesis under certain stress conditions. May act as a fidelity factor of the translation reaction, by catalyzing a one-codon backward translocation of tRNAs on improperly translocated ribosomes. Back-translocation proceeds from a post-translocation (POST) complex to a pre-translocation (PRE) complex, thus giving elongation factor G a second chance to translocate the tRNAs correctly. Binds to ribosomes in a GTP-dependent manner. The polypeptide is Elongation factor 4 (Pseudomonas aeruginosa (strain LESB58)).